Here is a 312-residue protein sequence, read N- to C-terminus: Heterotepalin-4 (312 aa).

The N-terminal stretch at 1-22 (MKSMLVVTISVWLILAPTSTWA) is a signal peptide. 2 disulfides stabilise this stretch: C56-C280 and C107-C128. E197 is an active-site residue. Positions 284–312 (YNQNAMFPQLIMSTYYNYMANLGDLFEEF) are excised as a propeptide.

The enzyme catalyses Endohydrolysis of the N-glycosidic bond at one specific adenosine on the 28S rRNA.. Its function is as follows. Inhibits protein synthesis in vitro. This Phytolacca heterotepala (Mexican pokeweed) protein is Heterotepalin-4.